The following is a 176-amino-acid chain: Crossover junction endodeoxyribonuclease RuvC (176 aa).

Catalysis depends on residues aspartate 7, glutamate 67, and aspartate 139. 3 residues coordinate Mg(2+): aspartate 7, glutamate 67, and aspartate 139.

The protein belongs to the RuvC family. In terms of assembly, homodimer which binds Holliday junction (HJ) DNA. The HJ becomes 2-fold symmetrical on binding to RuvC with unstacked arms; it has a different conformation from HJ DNA in complex with RuvA. In the full resolvosome a probable DNA-RuvA(4)-RuvB(12)-RuvC(2) complex forms which resolves the HJ. The cofactor is Mg(2+).

The protein localises to the cytoplasm. The enzyme catalyses Endonucleolytic cleavage at a junction such as a reciprocal single-stranded crossover between two homologous DNA duplexes (Holliday junction).. The RuvA-RuvB-RuvC complex processes Holliday junction (HJ) DNA during genetic recombination and DNA repair. Endonuclease that resolves HJ intermediates. Cleaves cruciform DNA by making single-stranded nicks across the HJ at symmetrical positions within the homologous arms, yielding a 5'-phosphate and a 3'-hydroxyl group; requires a central core of homology in the junction. The consensus cleavage sequence is 5'-(A/T)TT(C/G)-3'. Cleavage occurs on the 3'-side of the TT dinucleotide at the point of strand exchange. HJ branch migration catalyzed by RuvA-RuvB allows RuvC to scan DNA until it finds its consensus sequence, where it cleaves and resolves the cruciform DNA. This chain is Crossover junction endodeoxyribonuclease RuvC, found in Pelobacter propionicus (strain DSM 2379 / NBRC 103807 / OttBd1).